Here is a 545-residue protein sequence, read N- to C-terminus: MTKYIFITGGVVSSLGKGIAAASLAAILEARGLRVTLIKLDPYINVDPGTMSPFQHGEVFVTNDGAETDLDLGHYERFVKTTMTKRNNFTSGKIYENVIKKERRGDYLGGTVQVIPHITNEIKRCIKLGADAFDVAMVEIGGTVGDIESLPFLEAIRQMRIELGSQRAIFIHLTLVPYIATSGETKTKPTQHSVKELRSIGIQPDVLICRSEKPLSMADRAKIALFTNVEKEAVISLEDANSIYQIPMILHAQHLDEIVVKKLSLEAKQADLSEWQRVVDMQAVQTMTVKIAMVGKYTELNDAYKSINEALLHAGIHTETKVEIIYFDAEMIEKHGALLLESIDAILVPGGFGERGVEGKIKAIQYAREHKVPFLGICLGMQTAVIEFARNVVGLTGANSTEFNKETLYPVLGLISEWMDADGSKQTRDESTDLGGTMRLGGQYCHLAEGTLARKVYGKSQIIERHRHRYEVNNKYVDSLVKHGLIISGRSADNSLVEMIELADHPWFLACQFHPEFTSNPRDSHPLFKEFVFAARIHHQEKDKK.

The tract at residues 1 to 265 is amidoligase domain; the sequence is MTKYIFITGG…DEIVVKKLSL (265 aa). A CTP-binding site is contributed by serine 13. Serine 13 contributes to the UTP binding site. ATP contacts are provided by residues 14 to 19 and aspartate 71; that span reads SLGKGI. The Mg(2+) site is built by aspartate 71 and glutamate 139. Residues 146–148, 186–191, and lysine 222 contribute to the CTP site; these read DIE and KTKPTQ. Residues 186–191 and lysine 222 each bind UTP; that span reads KTKPTQ. Positions 290–541 constitute a Glutamine amidotransferase type-1 domain; the sequence is KIAMVGKYTE…VFAARIHHQE (252 aa). L-glutamine is bound at residue glycine 351. Cysteine 378 (nucleophile; for glutamine hydrolysis) is an active-site residue. Residues 379-382, glutamate 402, and arginine 469 contribute to the L-glutamine site; that span reads LGMQ. Catalysis depends on residues histidine 514 and glutamate 516.

Belongs to the CTP synthase family. In terms of assembly, homotetramer.

It carries out the reaction UTP + L-glutamine + ATP + H2O = CTP + L-glutamate + ADP + phosphate + 2 H(+). It catalyses the reaction L-glutamine + H2O = L-glutamate + NH4(+). The enzyme catalyses UTP + NH4(+) + ATP = CTP + ADP + phosphate + 2 H(+). It participates in pyrimidine metabolism; CTP biosynthesis via de novo pathway; CTP from UDP: step 2/2. With respect to regulation, allosterically activated by GTP, when glutamine is the substrate; GTP has no effect on the reaction when ammonia is the substrate. The allosteric effector GTP functions by stabilizing the protein conformation that binds the tetrahedral intermediate(s) formed during glutamine hydrolysis. Inhibited by the product CTP, via allosteric rather than competitive inhibition. Functionally, catalyzes the ATP-dependent amination of UTP to CTP with either L-glutamine or ammonia as the source of nitrogen. Regulates intracellular CTP levels through interactions with the four ribonucleotide triphosphates. This is CTP synthase from Legionella pneumophila (strain Lens).